We begin with the raw amino-acid sequence, 644 residues long: 2-isopropylmalate synthase (644 aa).

A disordered region spans residues 1–40 (MTTSESPDAYTESFGAHTIVKPAGPPRVGQPSWNPQRASS). Over residues 31–40 (PSWNPQRASS) the composition is skewed to polar residues. One can recognise a Pyruvate carboxyltransferase domain in the interval 72–346 (PLWCAVDLRD…DPQIDFSNID (275 aa)). Mg(2+) is bound by residues Asp81, His285, His287, and Asn321. The segment at 491-644 (PVRPLERIRQ…VVSAVNRAAR (154 aa)) is regulatory domain. Residues 575–593 (VTIASPAQPGEAGRHASDP) form a VNTR1 repeat. The interval 581–612 (AQPGEAGRHASDPVTIASPAQPGEAGRHASDP) is disordered. The VNTR2 repeat unit spans residues 594 to 612 (VTIASPAQPGEAGRHASDP).

Belongs to the alpha-IPM synthase/homocitrate synthase family. LeuA type 2 subfamily. In terms of assembly, homodimer. The cofactor is Mg(2+).

Its subcellular location is the cytoplasm. The enzyme catalyses 3-methyl-2-oxobutanoate + acetyl-CoA + H2O = (2S)-2-isopropylmalate + CoA + H(+). It participates in amino-acid biosynthesis; L-leucine biosynthesis; L-leucine from 3-methyl-2-oxobutanoate: step 1/4. Functionally, catalyzes the condensation of the acetyl group of acetyl-CoA with 3-methyl-2-oxobutanoate (2-ketoisovalerate) to form 3-carboxy-3-hydroxy-4-methylpentanoate (2-isopropylmalate). This chain is 2-isopropylmalate synthase, found in Mycobacterium tuberculosis (strain CDC 1551 / Oshkosh).